Reading from the N-terminus, the 93-residue chain is Small ribosomal subunit protein uS19 (93 aa).

It belongs to the universal ribosomal protein uS19 family.

Functionally, protein S19 forms a complex with S13 that binds strongly to the 16S ribosomal RNA. The protein is Small ribosomal subunit protein uS19 of Lawsonia intracellularis (strain PHE/MN1-00).